We begin with the raw amino-acid sequence, 1442 residues long: Clustered mitochondria protein homolog (1442 aa).

2 disordered regions span residues 38–100 (NYRN…KKPD) and 237–258 (GRSE…KDRP). Residues 82–100 (SEGEQQKDKTAAEDKKKPD) are compositionally biased toward basic and acidic residues. In terms of domain architecture, Clu spans 394–636 (RAEDTFSSKL…RTFPPDVNFL (243 aa)). Composition is skewed to basic and acidic residues over residues 696–714 (QKQE…EPKA) and 737–763 (ESKE…KVET). 2 disordered regions span residues 696-763 (QKQE…KVET) and 949-984 (SESD…SFQC). The segment covering 949-958 (SESDALTKSG) has biased composition (polar residues). TPR repeat units lie at residues 1087–1120 (AYNF…LNNV), 1213–1246 (ALLD…NIKY), and 1248–1281 (GEKS…EKET). A disordered region spans residues 1373–1442 (RQKEGGTSEQ…SSNASAQQVS (70 aa)). The span at 1380 to 1390 (SEQAAAAQASQ) shows a compositional bias: low complexity. Polar residues predominate over residues 1424 to 1442 (ASSSKQADNSSNASAQQVS).

It belongs to the CLU family.

The protein resides in the cytoplasm. Its function is as follows. mRNA-binding protein involved in proper cytoplasmic distribution of mitochondria. The chain is Clustered mitochondria protein homolog from Aedes aegypti (Yellowfever mosquito).